The primary structure comprises 196 residues: UPF0340 protein TTHA0583 (196 aa).

This sequence belongs to the UPF0340 family.

In Thermus thermophilus (strain ATCC 27634 / DSM 579 / HB8), this protein is UPF0340 protein TTHA0583.